Here is a 353-residue protein sequence, read N- to C-terminus: Rhodopsin (353 aa).

At 1-36 the chain is on the extracellular side; that stretch reads MNGTEGPFFYVPMLNTTGIVRSPYDYPQYYLVNPAA. Residues Asn2 and Asn15 are each glycosylated (N-linked (GlcNAc...) asparagine). The helical transmembrane segment at 37–61 threads the bilayer; it reads YAALGAYMFLLILLGFPINFLTLYV. Topologically, residues 62 to 73 are cytoplasmic; that stretch reads TIEHKKLRTPLN. A helical membrane pass occupies residues 74–96; it reads YILLNLAVANLFMVFGGFTTTMY. The Extracellular segment spans residues 97–110; that stretch reads TSMHGYFVLGRLGC. Residues Cys110 and Cys187 are joined by a disulfide bond. The chain crosses the membrane as a helical span at residues 111–133; it reads NLEGFFATLGGEIGLWSLVVLAI. Residues 134–136 carry the 'Ionic lock' involved in activated form stabilization motif; that stretch reads ERW. The Cytoplasmic segment spans residues 134–152; sequence ERWMVVCKPISNFRFGENH. A helical transmembrane segment spans residues 153-173; sequence AIMGLAFTWIMACACAVPPLV. At 174–202 the chain is on the extracellular side; that stretch reads GWSRYIPEGMQCSCGVDYYTRAEGFNNES. Residue Asn200 is glycosylated (N-linked (GlcNAc...) asparagine). Residues 203–224 traverse the membrane as a helical segment; sequence FVVYMFICHFLIPMAVVFFCYG. Residues 225 to 252 are Cytoplasmic-facing; the sequence is RLLCAVKEAAAAQQESETTQRAEREVTR. Residues 253-274 traverse the membrane as a helical segment; sequence MVVIMVVAFLICWLPYAGVAWW. At 275–286 the chain is on the extracellular side; the sequence is IFTHQGSEFGPV. The helical transmembrane segment at 287-308 threads the bilayer; sequence FMTIPAFFAKSSSIYNPLIYIC. An N6-(retinylidene)lysine modification is found at Lys296. At 309 to 353 the chain is on the cytoplasmic side; sequence MNKQFRHCMITTLCCGKNPFEEEEGASTTSKTEASSVSSSSVSPA. S-palmitoyl cysteine attachment occurs at residues Cys322 and Cys323. Residues 330-353 form a disordered region; that stretch reads EEEGASTTSKTEASSVSSSSVSPA. Low complexity predominate over residues 334–353; sequence ASTTSKTEASSVSSSSVSPA.

It belongs to the G-protein coupled receptor 1 family. Opsin subfamily. Post-translationally, phosphorylated on some or all of the serine and threonine residues present in the C-terminal region. In terms of processing, contains one covalently linked retinal chromophore.

The protein localises to the membrane. The protein resides in the cell projection. Its subcellular location is the cilium. It localises to the photoreceptor outer segment. Photoreceptor required for image-forming vision at low light intensity. While most salt water fish species use retinal as chromophore, most freshwater fish use 3-dehydroretinal, or a mixture of retinal and 3-dehydroretinal. Light-induced isomerization of 11-cis to all-trans retinal triggers a conformational change that activates signaling via G-proteins. Subsequent receptor phosphorylation mediates displacement of the bound G-protein alpha subunit by arrestin and terminates signaling. The chain is Rhodopsin (rho) from Tetraodon nigroviridis (Spotted green pufferfish).